We begin with the raw amino-acid sequence, 227 residues long: 6,7-dimethyl-8-ribityllumazine synthase, chloroplastic (227 aa).

The transit peptide at 1–71 directs the protein to the chloroplast; it reads MKSLASPPCL…LRSSFVQTAA (71 aa). Residues phenylalanine 94, 128-130, and 152-154 contribute to the 5-amino-6-(D-ribitylamino)uracil site; these read SFE and AVI. 157 to 158 provides a ligand contact to (2S)-2-hydroxy-3-oxobutyl phosphate; it reads DT. The Proton donor role is filled by histidine 160. Phenylalanine 185 serves as a coordination point for 5-amino-6-(D-ribitylamino)uracil. Position 199 (arginine 199) interacts with (2S)-2-hydroxy-3-oxobutyl phosphate.

The protein belongs to the DMRL synthase family. In terms of assembly, oligomer forming an icosahedral capsid.

The protein resides in the plastid. Its subcellular location is the chloroplast. It carries out the reaction (2S)-2-hydroxy-3-oxobutyl phosphate + 5-amino-6-(D-ribitylamino)uracil = 6,7-dimethyl-8-(1-D-ribityl)lumazine + phosphate + 2 H2O + H(+). Its pathway is cofactor biosynthesis; riboflavin biosynthesis; riboflavin from 2-hydroxy-3-oxobutyl phosphate and 5-amino-6-(D-ribitylamino)uracil: step 1/2. Functionally, catalyzes the formation of 6,7-dimethyl-8-ribityllumazine by condensation of 5-amino-6-(D-ribitylamino)uracil with 3,4-dihydroxy-2-butanone 4-phosphate. This is the penultimate step in the biosynthesis of riboflavin. This Arabidopsis thaliana (Mouse-ear cress) protein is 6,7-dimethyl-8-ribityllumazine synthase, chloroplastic.